Reading from the N-terminus, the 156-residue chain is Myosin regulatory light chain, striated adductor muscle (156 aa).

The residue at position 1 (alanine 1) is a Blocked amino end (Ala). EF-hand domains follow at residues lysine 15–threonine 50 and aspartate 84–asparagine 119. The Ca(2+) site is built by aspartate 28, aspartate 30, aspartate 32, and aspartate 39.

Its function is as follows. In molluscan muscle, calcium regulation is associated with myosin rather than with actin. Muscle myosin contains two types of light chains: the catalytic light chain, essential for ATPase activity, and the regulatory light chain, a calcium-binding protein responsible for Ca(2+) dependent binding and Ca(2+) dependent Mg-ATPase activity. This is Myosin regulatory light chain, striated adductor muscle from Mizuhopecten yessoensis (Japanese scallop).